Consider the following 85-residue polypeptide: Small ribosomal subunit protein uS17 (85 aa).

This sequence belongs to the universal ribosomal protein uS17 family. Part of the 30S ribosomal subunit.

One of the primary rRNA binding proteins, it binds specifically to the 5'-end of 16S ribosomal RNA. This chain is Small ribosomal subunit protein uS17, found in Citrifermentans bemidjiense (strain ATCC BAA-1014 / DSM 16622 / JCM 12645 / Bem) (Geobacter bemidjiensis).